The sequence spans 729 residues: Capsid protein VP1 (729 aa).

Basic residues predominate over residues 1–10; sequence MAPPAKRAKR. Disordered regions lie at residues 1 to 38, 96 to 115, and 130 to 185; these read MAPP…SDAA, LATD…KRTR, and KLTS…VGVS. The Nuclear localization signal motif lies at 4 to 13; the sequence is PAKRAKRGWV. The interval 19–64 is phospholipase A2-like; it reads YLGPGNSLDQGEPTNPSDAAAKEHDEAYDQYIKSGKNPYLYFSAAD. A compositionally biased stretch (polar residues) spans 25–35; the sequence is SLDQGEPTNPS. A compositionally biased stretch (low complexity) spans 132-142; sequence TSSAAQQSSQT. Over residues 143-152 the composition is skewed to polar residues; sequence MSDGTSQPDS. The span at 168–184 shows a compositional bias: gly residues; it reads GPGGSGGGGSGGGGVGV. Residue asparagine 325 participates in Mg(2+) binding.

The protein belongs to the parvoviridae capsid protein family.

Its subcellular location is the virion. The protein localises to the host nucleus. Its function is as follows. Capsid protein self-assembles to form an icosahedral capsid with a T=1 symmetry, about 22 nm in diameter, and consisting of 60 copies of two size variants of the capsid proteins, VP1 and VP2, which differ by the presence of an N-terminal extension in the minor protein VP1. The capsid encapsulates the genomic ssDNA. Capsid proteins are responsible for the attachment to host cell receptors. This attachment induces virion internalization predominantly through clathrin-dependent endocytosis. Binding to the host receptors also induces capsid rearrangements leading to surface exposure of VP1 N-terminus, specifically its phospholipase A2-like region and putative nuclear localization signal(s). VP1 N-terminus might serve as a lipolytic enzyme to breach the endosomal membrane during entry into host cell and might contribute to virus transport to the nucleus. This chain is Capsid protein VP1, found in Mus musculus (Mouse).